A 409-amino-acid chain; its full sequence is Peptidase T (409 aa).

His78 contacts Zn(2+). Asp80 is a catalytic residue. Asp140 serves as a coordination point for Zn(2+). Glu174 serves as the catalytic Proton acceptor. Residues Glu175, Asp197, and His379 each contribute to the Zn(2+) site.

The protein belongs to the peptidase M20B family. It depends on Zn(2+) as a cofactor.

It is found in the cytoplasm. The catalysed reaction is Release of the N-terminal residue from a tripeptide.. Functionally, cleaves the N-terminal amino acid of tripeptides. This Aliivibrio fischeri (strain ATCC 700601 / ES114) (Vibrio fischeri) protein is Peptidase T.